A 419-amino-acid chain; its full sequence is WD repeat-containing protein JIP5 (419 aa).

WD repeat units follow at residues 4 to 45, 66 to 105, 108 to 147, 180 to 220, 224 to 263, 268 to 308, and 351 to 390; these read ALSS…HNQS, PSHK…VKAR, RAHE…EGDA, DQED…KGVE, DQED…LDHA, GHPS…GIVG, and DAAE…QPPP. The disordered stretch occupies residues 172–192; sequence DPPRSKKKDQEDDLKRKRDEE. Residues 372-408 are disordered; sequence SADGSDESAGESDVMQPPPATKRRTAKSKAGKKSVHD. Positions 392–404 are enriched in basic residues; the sequence is TKRRTAKSKAGKK.

The protein belongs to the WD repeat WDR55 family.

It is found in the nucleus. It localises to the nucleolus. In Malassezia globosa (strain ATCC MYA-4612 / CBS 7966) (Dandruff-associated fungus), this protein is WD repeat-containing protein JIP5 (JIP5).